Consider the following 760-residue polypeptide: Transferrin receptor protein 1 (760 aa).

Topologically, residues 1–67 (MMDQARSAFS…KPKRCSGSIC (67 aa)) are cytoplasmic. The mediates interaction with SH3BP4 stretch occupies residues 1–67 (MMDQARSAFS…KPKRCSGSIC (67 aa)). 2 positions are modified to phosphoserine: Ser10 and Ser19. Residue Tyr20 is modified to Phosphotyrosine. The Endocytosis signal signature appears at 20–23 (YTRF). Thr21 carries the phosphothreonine modification. A Phosphoserine modification is found at Ser24. Positions 58 to 61 (KPKR) match the Stop-transfer sequence motif. 2 S-palmitoyl cysteine lipidation sites follow: Cys62 and Cys67. Residues 68 to 88 (YGTIAVIVFFLIGFMIGYLGY) traverse the membrane as a helical; Signal-anchor for type II membrane protein segment. The Extracellular portion of the chain corresponds to 89–760 (CKGVEPKTEC…GDVWDIDNEF (672 aa)). Thr104 carries O-linked (GalNAc...) threonine glycosylation. The 91-residue stretch at 223-313 (SKAATVTGKL…GTGDPYTPGF (91 aa)) folds into the PA domain. Asn251 and Asn317 each carry an N-linked (GlcNAc...) asparagine glycan. The tract at residues 569 to 760 (TMDTYKELIE…GDVWDIDNEF (192 aa)) is ligand-binding. The short motif at 646–648 (RGD) is the Cell attachment site; required for binding to transferrin element. Asn727 carries an N-linked (GlcNAc...) asparagine glycan.

The protein belongs to the peptidase M28 family. M28B subfamily. As to quaternary structure, homodimer; disulfide-linked. Binds one transferrin or HFE molecule per subunit. Binds the HLA class II histocompatibility antigen, DR1. Interacts with SH3BP3. Interacts with STEAP3; facilitates TFRC endocytosis in erythroid precursor cells. Interacts with GRM2. In terms of assembly, (Microbial infection) Interacts with Guanarito, Junin and Machupo arenavirus glycoprotein complex. (Microbial infection) Interacts with rabies virus protein G. As to quaternary structure, (Microbial infection) Interacts with SARS-CoV-2 spike protein S. Post-translationally, stearoylated by ZDHHC6 which inhibits TFRC-mediated activation of the JNK pathway and promotes mitochondrial fragmentation. Stearoylation does not affect iron uptake. N- and O-glycosylated, phosphorylated and palmitoylated. The serum form is only glycosylated. In terms of processing, proteolytically cleaved on Arg-100 to produce the soluble serum form (sTfR). Post-translationally, palmitoylated on both Cys-62 and Cys-67. Cys-62 seems to be the major site of palmitoylation.

The protein localises to the cell membrane. It localises to the melanosome. Its subcellular location is the secreted. In terms of biological role, cellular uptake of iron occurs via receptor-mediated endocytosis of ligand-occupied transferrin receptor into specialized endosomes. Endosomal acidification leads to iron release. The apotransferrin-receptor complex is then recycled to the cell surface with a return to neutral pH and the concomitant loss of affinity of apotransferrin for its receptor. Transferrin receptor is necessary for development of erythrocytes and the nervous system. A second ligand, the hereditary hemochromatosis protein HFE, competes for binding with transferrin for an overlapping C-terminal binding site. Positively regulates T and B cell proliferation through iron uptake. Acts as a lipid sensor that regulates mitochondrial fusion by regulating activation of the JNK pathway. When dietary levels of stearate (C18:0) are low, promotes activation of the JNK pathway, resulting in HUWE1-mediated ubiquitination and subsequent degradation of the mitofusin MFN2 and inhibition of mitochondrial fusion. When dietary levels of stearate (C18:0) are high, TFRC stearoylation inhibits activation of the JNK pathway and thus degradation of the mitofusin MFN2. Mediates uptake of NICOL1 into fibroblasts where it may regulate extracellular matrix production. Its function is as follows. (Microbial infection) Acts as a receptor for new-world arenaviruses: Guanarito, Junin and Machupo virus. Functionally, (Microbial infection) Acts as a host entry factor for rabies virus that hijacks the endocytosis of TFRC to enter cells. (Microbial infection) Acts as a host entry factor for SARS-CoV, MERS-CoV and SARS-CoV-2 viruses that hijack the endocytosis of TFRC to enter cells. This Homo sapiens (Human) protein is Transferrin receptor protein 1 (TFRC).